Consider the following 1997-residue polypeptide: Nucleoprotein TPR (1997 aa).

Coiled-coil stretches lie at residues 1-36 (QEQH…NDLL), 101-277 (EIVK…HQMT), 335-1103 (DSTE…IKTI), and 1129-1305 (AEAS…EPQE). Composition is skewed to basic and acidic residues over residues 672–702 (SSEY…KTVE) and 1290–1305 (REQQ…EPQE). Disordered stretches follow at residues 672–706 (SSEY…QMEQ), 1290–1352 (REQQ…AAVP), 1438–1529 (AFVQ…KTET), 1561–1752 (IQTS…RRQS), 1795–1832 (AIHS…ASQG), and 1870–1997 (ENPA…RSNI). Polar residues-rich tracts occupy residues 1306–1321 (TTRI…QPTT), 1328–1347 (SANT…SKVT), and 1446–1487 (SHAT…SSSI). Basic and acidic residues predominate over residues 1511–1529 (DQQRTKKRKEEDIEEKTET). Residues 1561–1587 (IQTSQVIESQAPEQLQNVQSTQDSLQD) show a composition bias toward polar residues. Acidic residues-rich tracts occupy residues 1601 to 1637 (SDEE…DSNE) and 1644 to 1667 (GNED…ETED). Polar residues-rich tracts occupy residues 1692–1709 (AEST…SASD), 1817–1830 (QASS…QLAS), and 1879–1899 (HASQ…TSVD). Over residues 1902–1915 (AADEGDEVFVEAES) the composition is skewed to acidic residues. A compositionally biased stretch (low complexity) spans 1950–1959 (SSSIADTSSS).

Belongs to the TPR family. In terms of assembly, homodimer. Part of the nuclear pore complex (NPC). Interacts with nuclear receptor KPNB1; the interaction occurs in a RanGTP-dependent manner. Associates with the Importin alpha/Importin beta receptor. Expressed in epithelial cells, oocytes and egg (at protein level).

It is found in the nucleus. It localises to the nucleus membrane. The protein localises to the nucleus envelope. Its subcellular location is the nuclear pore complex. The protein resides in the cytoplasm. It is found in the cytoskeleton. It localises to the spindle. The protein localises to the chromosome. Its subcellular location is the centromere. The protein resides in the kinetochore. Component of the nuclear pore complex (NPC), a complex required for the trafficking across the nuclear envelope. Functions as a scaffolding element in the nuclear phase of the NPC essential for normal nucleocytoplasmic transport of proteins and mRNAs, plays a role in the establishment of nuclear-peripheral chromatin compartmentalization in interphase, and in the mitotic spindle checkpoint signaling during mitosis. Involved in the quality control and retention of unspliced mRNAs in the nucleus. Implicated in nuclear export of mRNAs transcribed from heat shock gene promoters. May play a limited role in the regulation of nuclear protein export. May be involved in the formation and/or maintenance of NPC-associated perinuclear heterochromatin exclusion zones (HEZs). Finally, may act as a spatial regulator of the spindle-assembly checkpoint (SAC) response. The protein is Nucleoprotein TPR of Xenopus laevis (African clawed frog).